The chain runs to 385 residues: Putative UDP-N-acetylglucosamine 2-epimerase (385 aa).

Belongs to the UDP-N-acetylglucosamine 2-epimerase family.

The protein localises to the cytoplasm. The enzyme catalyses UDP-N-acetyl-alpha-D-glucosamine = UDP-N-acetyl-alpha-D-mannosamine. The polypeptide is Putative UDP-N-acetylglucosamine 2-epimerase (Clostridium acetobutylicum (strain ATCC 824 / DSM 792 / JCM 1419 / IAM 19013 / LMG 5710 / NBRC 13948 / NRRL B-527 / VKM B-1787 / 2291 / W)).